The chain runs to 311 residues: Very-long-chain 3-oxoacyl-CoA reductase-B (311 aa).

The chain crosses the membrane as a helical span at residues 8–28; sequence LFWVGAVTVLWLSVSSLWSLI. 48–77 contacts NADP(+); the sequence is GKWAVVTGATDGIGKAYAEELARRGFAIVL. The helical transmembrane segment at 125-145 threads the bilayer; that stretch reads IGVLVNNVGVSYSYPEFFLNI. Ser187 is a binding site for substrate. Tyr200 functions as the Proton acceptor in the catalytic mechanism. A helical membrane pass occupies residues 269-289; the sequence is GYLPHAIMGWVTASLLPAKLL.

This sequence belongs to the short-chain dehydrogenases/reductases (SDR) family. 17-beta-HSD 3 subfamily.

It is found in the endoplasmic reticulum membrane. It catalyses the reaction a very-long-chain (3R)-3-hydroxyacyl-CoA + NADP(+) = a very-long-chain 3-oxoacyl-CoA + NADPH + H(+). It carries out the reaction 17beta-estradiol + NAD(+) = estrone + NADH + H(+). The enzyme catalyses 17beta-estradiol + NADP(+) = estrone + NADPH + H(+). Its pathway is lipid metabolism; fatty acid biosynthesis. It participates in steroid biosynthesis; estrogen biosynthesis. Its function is as follows. Catalyzes the second of the four reactions of the long-chain fatty acids elongation cycle. This endoplasmic reticulum-bound enzymatic process, allows the addition of two carbons to the chain of long- and very long-chain fatty acids/VLCFAs per cycle. This enzyme has a 3-ketoacyl-CoA reductase activity, reducing 3-ketoacyl-CoA to 3-hydroxyacyl-CoA, within each cycle of fatty acid elongation. Thereby, it may participate in the production of VLCFAs of different chain lengths that are involved in multiple biological processes as precursors of membrane lipids and lipid mediators. May also catalyze the transformation of estrone (E1) into estradiol (E2) and play a role in estrogen formation. This Danio rerio (Zebrafish) protein is Very-long-chain 3-oxoacyl-CoA reductase-B (hsd17b12b).